Here is a 37-residue protein sequence, read N- to C-terminus: Hemocyanin subunit B (37 aa).

Belongs to the tyrosinase family. Hemocyanin subfamily. Hemolymph.

It localises to the secreted. The protein localises to the extracellular space. Hemocyanins are copper-containing oxygen carriers occurring freely dissolved in the hemolymph of many mollusks and arthropods. The chain is Hemocyanin subunit B from Cancer pagurus (Rock crab).